We begin with the raw amino-acid sequence, 144 residues long: NADH dehydrogenase [ubiquinone] 1 alpha subcomplex subunit 13 (144 aa).

Alanine 2 carries the N-acetylalanine modification. The helical transmembrane segment at 30–51 threads the bilayer; that stretch reads LSGYSMLAIGIGTLIYGHWSIM.

This sequence belongs to the complex I NDUFA13 subunit family. As to quaternary structure, complex I is composed of 45 different subunits. Interacts with CARD15, but not with CARD4. Interacts with STAT3, but not with STAT1, STAT2 and STAT5A. Interacts with OLFM4.

It is found in the mitochondrion inner membrane. The protein localises to the nucleus. Its function is as follows. Accessory subunit of the mitochondrial membrane respiratory chain NADH dehydrogenase (Complex I), that is believed not to be involved in catalysis. Complex I functions in the transfer of electrons from NADH to the respiratory chain. The immediate electron acceptor for the enzyme is believed to be ubiquinone. Involved in the interferon/all-trans-retinoic acid (IFN/RA) induced cell death. This apoptotic activity is inhibited by interaction with viral IRF1. Prevents the transactivation of STAT3 target genes. May play a role in CARD15-mediated innate mucosal responses and serve to regulate intestinal epithelial cell responses to microbes. This chain is NADH dehydrogenase [ubiquinone] 1 alpha subcomplex subunit 13 (NDUFA13), found in Pan troglodytes (Chimpanzee).